A 251-amino-acid polypeptide reads, in one-letter code: CDP-diacylglycerol pyrophosphatase (251 aa).

The helical transmembrane segment at 4–24 (AGLLFLVMIVIAVVAAGIGYW) threads the bilayer.

Belongs to the Cdh family.

The protein resides in the cell inner membrane. It carries out the reaction a CDP-1,2-diacyl-sn-glycerol + H2O = a 1,2-diacyl-sn-glycero-3-phosphate + CMP + 2 H(+). Its pathway is phospholipid metabolism; CDP-diacylglycerol degradation; phosphatidate from CDP-diacylglycerol: step 1/1. In Escherichia coli O127:H6 (strain E2348/69 / EPEC), this protein is CDP-diacylglycerol pyrophosphatase.